A 248-amino-acid polypeptide reads, in one-letter code: Putative imidazole glycerol phosphate synthase subunit hisF2 (248 aa).

D129 is a catalytic residue.

Belongs to the HisA/HisF family. Heterodimer of HisH and HisF.

The protein localises to the cytoplasm. The enzyme catalyses 5-[(5-phospho-1-deoxy-D-ribulos-1-ylimino)methylamino]-1-(5-phospho-beta-D-ribosyl)imidazole-4-carboxamide + L-glutamine = D-erythro-1-(imidazol-4-yl)glycerol 3-phosphate + 5-amino-1-(5-phospho-beta-D-ribosyl)imidazole-4-carboxamide + L-glutamate + H(+). It participates in amino-acid biosynthesis; L-histidine biosynthesis; L-histidine from 5-phospho-alpha-D-ribose 1-diphosphate: step 5/9. In terms of biological role, IGPS catalyzes the conversion of PRFAR and glutamine to IGP, AICAR and glutamate. The HisF subunit catalyzes the cyclization activity that produces IGP and AICAR from PRFAR using the ammonia provided by the HisH subunit. In Campylobacter jejuni subsp. jejuni serotype O:2 (strain ATCC 700819 / NCTC 11168), this protein is Putative imidazole glycerol phosphate synthase subunit hisF2 (hisF2).